The chain runs to 195 residues: Inner membrane-spanning protein YciB (195 aa).

5 helical membrane passes run 34–54, 65–85, 88–108, 131–151, and 160–180; these read IYGATATLILASVIVYGALWL, FTLGACLVLGGLTLAFHEDTF, WKAPLVNWLFALAFAGSHFIG, LNIAWVVFFLVCGFANLYVVF, and FKVFGSLGMTLLFLIGQGIFL.

The protein belongs to the YciB family.

The protein localises to the cell inner membrane. In terms of biological role, plays a role in cell envelope biogenesis, maintenance of cell envelope integrity and membrane homeostasis. This Pseudomonas paraeruginosa (strain DSM 24068 / PA7) (Pseudomonas aeruginosa (strain PA7)) protein is Inner membrane-spanning protein YciB.